Reading from the N-terminus, the 202-residue chain is Inner membrane-spanning protein YciB (202 aa).

Transmembrane regions (helical) follow at residues 3 to 23 (FFLDLLPVILFFVAYKFAGAA), 46 to 66 (ILIATAVAIAATLAQVLIVWL), 74 to 94 (MLWVSLAIITLFGGATLVFHN), 100 to 120 (WKPTVFYWTFAGALAVSALLF), 145 to 165 (LAWIGFFTLMGFLNLYVAYGY), and 173 to 193 (FKLFGAMGLMLAFFLGQGFYL).

Belongs to the YciB family.

The protein resides in the cell inner membrane. Plays a role in cell envelope biogenesis, maintenance of cell envelope integrity and membrane homeostasis. This is Inner membrane-spanning protein YciB from Azoarcus sp. (strain BH72).